Here is a 229-residue protein sequence, read N- to C-terminus: MRLVIARCSVDYIGRLEAHLPMADRLLMVKADGSVSIHADDRAYKPLNWMTPPCTLTETTHEESETGESIPLWIVENKKGEQLRITIEALHSDMYYDLGEDPGLQKDGVEAHLQELLAEHIETLGDGYSLVRREYPTPIGPVDILCRDDKGGSVAVEIKRRGGIDGVEQLSRYLELLNRDDLLAPVAGVFAAQHIKPQARTLAEDRGIRCVTLDYDSLRGIESTELRLF.

This sequence belongs to the NucS endonuclease family.

The protein resides in the cytoplasm. Functionally, cleaves both 3' and 5' ssDNA extremities of branched DNA structures. The sequence is that of Endonuclease NucS from Corynebacterium diphtheriae (strain ATCC 700971 / NCTC 13129 / Biotype gravis).